The sequence spans 182 residues: MPVRPARCYRRIKGPPYTREEYIHGAPMIQIPKFDMGVTSAAARAAFSMVAKLVVEERGQIRMQALEAARQMAYKYLSKYVGDANYYLRLNVVPHHVLRENRMLAMAGADRLQEGMRLAFGSPAGRAARVEPGQVIFYAEFRPEHIAHIKEALRRAASKLPLPTRIVIETKDDGGGKTFTQK.

It belongs to the universal ribosomal protein uL16 family.

In Pyrobaculum islandicum (strain DSM 4184 / JCM 9189 / GEO3), this protein is Large ribosomal subunit protein uL16.